The chain runs to 76 residues: DNA-directed RNA polymerase subunit omega (76 aa).

The protein belongs to the RNA polymerase subunit omega family. As to quaternary structure, the RNAP catalytic core consists of 2 alpha, 1 beta, 1 beta' and 1 omega subunit. When a sigma factor is associated with the core the holoenzyme is formed, which can initiate transcription.

It carries out the reaction RNA(n) + a ribonucleoside 5'-triphosphate = RNA(n+1) + diphosphate. Its function is as follows. Promotes RNA polymerase assembly. Latches the N- and C-terminal regions of the beta' subunit thereby facilitating its interaction with the beta and alpha subunits. The protein is DNA-directed RNA polymerase subunit omega of Staphylococcus carnosus (strain TM300).